The following is a 560-amino-acid chain: Membrane protein insertase YidC (560 aa).

A helical membrane pass occupies residues 7 to 27; sequence ILIVALAIVSYVMVLKWNQDY. Residues 38-56 are compositionally biased toward polar residues; sequence ASSTTTSGLPDTATGNNAA. Positions 38–76 are disordered; sequence ASSTTTSGLPDTATGNNAAASDDIPRAASDTSAPAETPV. 4 helical membrane passes run 367–387, 437–457, 468–488, and 515–535; these read IVGN…GIFF, LGGC…YWVL, FMLW…PIIM, and PIIF…YWVV.

This sequence belongs to the OXA1/ALB3/YidC family. Type 1 subfamily. In terms of assembly, interacts with the Sec translocase complex via SecD. Specifically interacts with transmembrane segments of nascent integral membrane proteins during membrane integration.

The protein localises to the cell inner membrane. Required for the insertion and/or proper folding and/or complex formation of integral membrane proteins into the membrane. Involved in integration of membrane proteins that insert both dependently and independently of the Sec translocase complex, as well as at least some lipoproteins. Aids folding of multispanning membrane proteins. The polypeptide is Membrane protein insertase YidC (Pseudomonas fluorescens (strain Pf0-1)).